Reading from the N-terminus, the 457-residue chain is Protein unc-93 homolog A (457 aa).

Helical transmembrane passes span Val8 to Leu28, Ala42 to Ile62, Leu65 to Asn85, Phe86 to Pro106, and Ile140 to Phe160. Asn190 carries an N-linked (GlcNAc...) asparagine glycan. Transmembrane regions (helical) follow at residues Thr202–Leu222, Leu257–Glu277, Phe291–Gly311, Ala320–Trp340, Ala344–Trp364, and Phe395–Leu415.

The protein belongs to the unc-93 family. Expressed in testis, small intestine, spleen, prostate and ovary.

The protein localises to the cell membrane. The polypeptide is Protein unc-93 homolog A (UNC93A) (Homo sapiens (Human)).